The primary structure comprises 250 residues: ATP synthase subunit a (250 aa).

The next 6 membrane-spanning stretches (helical) occupy residues A29–S49, F84–V104, I114–I134, L143–I163, I185–I205, and A208–L228.

This sequence belongs to the ATPase A chain family. As to quaternary structure, F-type ATPases have 2 components, CF(1) - the catalytic core - and CF(0) - the membrane proton channel. CF(1) has five subunits: alpha(3), beta(3), gamma(1), delta(1), epsilon(1). CF(0) has three main subunits: a(1), b(2) and c(9-12). The alpha and beta chains form an alternating ring which encloses part of the gamma chain. CF(1) is attached to CF(0) by a central stalk formed by the gamma and epsilon chains, while a peripheral stalk is formed by the delta and b chains.

It localises to the cell inner membrane. Functionally, key component of the proton channel; it plays a direct role in the translocation of protons across the membrane. The sequence is that of ATP synthase subunit a from Rhizobium rhizogenes (strain K84 / ATCC BAA-868) (Agrobacterium radiobacter).